The chain runs to 228 residues: Non-fluorescent flavoprotein (228 aa).

It belongs to the bacterial luciferase oxidoreductase family. As to quaternary structure, homodimer. FMN serves as cofactor.

This chain is Non-fluorescent flavoprotein (luxF), found in Photobacterium leiognathi.